The following is a 391-amino-acid chain: Elongation factor Tu (391 aa).

The tr-type G domain occupies 10–201 (KPHVNIGTIG…AVDEYIPTPA (192 aa)). The tract at residues 19-26 (GHVDHGKT) is G1. 19–26 (GHVDHGKT) is a GTP binding site. Thr-26 serves as a coordination point for Mg(2+). Positions 55–59 (GITIS) are G2. Positions 76–79 (DCPG) are G3. Residues 76–80 (DCPGH) and 131–134 (NKVD) each bind GTP. The G4 stretch occupies residues 131–134 (NKVD). The G5 stretch occupies residues 169–171 (SAL).

The protein belongs to the TRAFAC class translation factor GTPase superfamily. Classic translation factor GTPase family. EF-Tu/EF-1A subfamily. Monomer.

It localises to the cytoplasm. The enzyme catalyses GTP + H2O = GDP + phosphate + H(+). In terms of biological role, GTP hydrolase that promotes the GTP-dependent binding of aminoacyl-tRNA to the A-site of ribosomes during protein biosynthesis. The protein is Elongation factor Tu of Jannaschia sp. (strain CCS1).